The following is a 277-amino-acid chain: Phosphatidylglycerol--prolipoprotein diacylglyceryl transferase (277 aa).

4 consecutive transmembrane segments (helical) span residues 11-31 (IIFS…LISF), 55-75 (LLYI…IIFY), 93-113 (GGMS…YLSL), and 117-137 (VKIL…LGAG). Arg-138 contacts a 1,2-diacyl-sn-glycero-3-phospho-(1'-sn-glycerol). Helical transmembrane passes span 192–212 (PSQL…IYFF), 220–240 (GSIS…SEFF), and 256–276 (MGQI…NLFI).

Belongs to the Lgt family.

It localises to the cell inner membrane. The enzyme catalyses L-cysteinyl-[prolipoprotein] + a 1,2-diacyl-sn-glycero-3-phospho-(1'-sn-glycerol) = an S-1,2-diacyl-sn-glyceryl-L-cysteinyl-[prolipoprotein] + sn-glycerol 1-phosphate + H(+). Its pathway is protein modification; lipoprotein biosynthesis (diacylglyceryl transfer). Catalyzes the transfer of the diacylglyceryl group from phosphatidylglycerol to the sulfhydryl group of the N-terminal cysteine of a prolipoprotein, the first step in the formation of mature lipoproteins. The polypeptide is Phosphatidylglycerol--prolipoprotein diacylglyceryl transferase (Buchnera aphidicola subsp. Schizaphis graminum (strain Sg)).